The primary structure comprises 418 residues: MGILQDLEFRGLINQQTDAEGLEQLLEKESVKLYCGFDPTADSLHIGHMLPVLMLRRFQLAGHQPIALVGGGTGMIGDPSGKKAERTLNTKDTVAYYTESIKNQLSNFLEFENVENPATMANNYDWLGNLDVISFLRDIGKNFGLNYMLAKDTVASRLETGISFTEFSYMILQSYDFLNLYQHHNCRLQIGGSDQWGNITAGLELIRKSEEDAKAFGLTIPLVTKSDGTKFGKTEGGAIWLDPEKTTPYEFYQFWINTDDRDVVKYLKYFTFLSHEEILELEKQVAEAPEKRAAQKALGAEMTKLVHGEEALEQAIKISAALFSGSVAELTASEIEQGFKDVPSVERTAEDTVLIDLLVESKISPSKRQAREDVTNGAIYVNGERTQALDYVVTEKDRIEGKFTIIRRGKKKYFLIRY.

Tyrosine 34 contributes to the L-tyrosine binding site. The short motif at proline 39 to histidine 48 is the 'HIGH' region element. 2 residues coordinate L-tyrosine: tyrosine 169 and glutamine 173. A 'KMSKS' region motif is present at residues lysine 230 to threonine 234. Lysine 233 is an ATP binding site. The 67-residue stretch at threonine 352–tyrosine 418 folds into the S4 RNA-binding domain.

The protein belongs to the class-I aminoacyl-tRNA synthetase family. TyrS type 1 subfamily. In terms of assembly, homodimer.

The protein localises to the cytoplasm. It carries out the reaction tRNA(Tyr) + L-tyrosine + ATP = L-tyrosyl-tRNA(Tyr) + AMP + diphosphate + H(+). Catalyzes the attachment of tyrosine to tRNA(Tyr) in a two-step reaction: tyrosine is first activated by ATP to form Tyr-AMP and then transferred to the acceptor end of tRNA(Tyr). The sequence is that of Tyrosine--tRNA ligase 1 from Bacillus anthracis.